The chain runs to 210 residues: tRNA (guanine-N(7)-)-methyltransferase (210 aa).

The S-adenosyl-L-methionine site is built by Glu-43, Glu-68, Asp-95, and Asp-117. Asp-117 is a catalytic residue. Substrate contacts are provided by residues Lys-121, Asp-153, and 190–193; that span reads TEYE.

This sequence belongs to the class I-like SAM-binding methyltransferase superfamily. TrmB family.

It catalyses the reaction guanosine(46) in tRNA + S-adenosyl-L-methionine = N(7)-methylguanosine(46) in tRNA + S-adenosyl-L-homocysteine. It functions in the pathway tRNA modification; N(7)-methylguanine-tRNA biosynthesis. Functionally, catalyzes the formation of N(7)-methylguanine at position 46 (m7G46) in tRNA. The polypeptide is tRNA (guanine-N(7)-)-methyltransferase (Macrococcus caseolyticus (strain JCSC5402) (Macrococcoides caseolyticum)).